The chain runs to 197 residues: Fucoxanthin-chlorophyll a-c binding protein C, chloroplastic (197 aa).

Residues Met-1 to Met-31 constitute a chloroplast transit peptide. The next 3 helical transmembrane spans lie at Ile-73–Ile-94, Ile-113–Met-133, and Gly-174–Pro-196.

It belongs to the fucoxanthin chlorophyll protein family. The LHC complex of chromophytic algae is composed of fucoxanthin, chlorophyll A and C bound non-covalently by fucoxanthin chlorophyll proteins (FCPs). The ratio of the pigments in LHC; fucoxanthin: chlorophyll C: chlorophyll A; (0.6-1): (0.1-0.3): (1).

It localises to the plastid. The protein localises to the chloroplast thylakoid membrane. The light-harvesting complex (LHC) functions as a light receptor, it captures and delivers excitation energy to photosystems with which it is closely associated. Energy is transferred from the carotenoid and chlorophyll C (or B) to chlorophyll A and the photosynthetic reaction centers where it is used to synthesize ATP and reducing power. The polypeptide is Fucoxanthin-chlorophyll a-c binding protein C, chloroplastic (FCPC) (Phaeodactylum tricornutum (Diatom)).